We begin with the raw amino-acid sequence, 170 residues long: Large ribosomal subunit protein uL10 (170 aa).

Belongs to the universal ribosomal protein uL10 family. In terms of assembly, part of the ribosomal stalk of the 50S ribosomal subunit. The N-terminus interacts with L11 and the large rRNA to form the base of the stalk. The C-terminus forms an elongated spine to which L12 dimers bind in a sequential fashion forming a multimeric L10(L12)X complex.

Forms part of the ribosomal stalk, playing a central role in the interaction of the ribosome with GTP-bound translation factors. The polypeptide is Large ribosomal subunit protein uL10 (Jannaschia sp. (strain CCS1)).